We begin with the raw amino-acid sequence, 542 residues long: Putative ankyrin repeat protein FPV115 (542 aa).

8 ANK repeats span residues 33-62 (FRNL…DPNS), 157-186 (DGLL…KTNL), 218-247 (NDIN…DINT), 251-281 (KGKT…DINV), 285-314 (EGLT…DVKV), 316-345 (TTST…EFIT), 347-375 (DYLS…DVNS), and 378-407 (CIST…NINA).

The protein is Putative ankyrin repeat protein FPV115 of Fowlpox virus (strain NVSL) (FPV).